The chain runs to 391 residues: Ferrochelatase (391 aa).

Fe cation-binding residues include His-196 and Glu-281.

Belongs to the ferrochelatase family.

Its subcellular location is the cytoplasm. It catalyses the reaction heme b + 2 H(+) = protoporphyrin IX + Fe(2+). Its pathway is porphyrin-containing compound metabolism; protoheme biosynthesis; protoheme from protoporphyrin-IX: step 1/1. Catalyzes the ferrous insertion into protoporphyrin IX. This is Ferrochelatase from Prochlorococcus marinus (strain AS9601).